Consider the following 1092-residue polypeptide: DNA polymerase II large subunit (1092 aa).

Belongs to the archaeal DNA polymerase II family. In terms of assembly, heterodimer of a large subunit and a small subunit.

The enzyme catalyses DNA(n) + a 2'-deoxyribonucleoside 5'-triphosphate = DNA(n+1) + diphosphate. The catalysed reaction is Exonucleolytic cleavage in the 3'- to 5'-direction to yield nucleoside 5'-phosphates.. Possesses two activities: a DNA synthesis (polymerase) and an exonucleolytic activity that degrades single-stranded DNA in the 3'- to 5'-direction. Has a template-primer preference which is characteristic of a replicative DNA polymerase. This is DNA polymerase II large subunit (polC) from Methanothermobacter thermautotrophicus (strain ATCC 29096 / DSM 1053 / JCM 10044 / NBRC 100330 / Delta H) (Methanobacterium thermoautotrophicum).